We begin with the raw amino-acid sequence, 100 residues long: Small ribosomal subunit protein uS14c (100 aa).

The protein belongs to the universal ribosomal protein uS14 family. As to quaternary structure, part of the 30S ribosomal subunit.

The protein localises to the plastid. It is found in the chloroplast. In terms of biological role, binds 16S rRNA, required for the assembly of 30S particles. In Bigelowiella natans (Pedinomonas minutissima), this protein is Small ribosomal subunit protein uS14c.